The chain runs to 305 residues: Ribonuclease BN (305 aa).

Positions 64, 66, 68, 69, 141, 212, and 270 each coordinate Zn(2+). Aspartate 68 functions as the Proton acceptor in the catalytic mechanism.

Belongs to the RNase Z family. RNase BN subfamily. Homodimer. The cofactor is Zn(2+).

Zinc phosphodiesterase, which has both exoribonuclease and endoribonuclease activities. In Salmonella paratyphi C (strain RKS4594), this protein is Ribonuclease BN.